Here is a 272-residue protein sequence, read N- to C-terminus: Undecaprenyl-diphosphatase (272 aa).

Helical transmembrane passes span 5–25 (YSLFVAFVLGVVEGLTEFLPV), 45–65 (AKTFEVIIQLGSILAVVVVFW), 88–108 (HLTLGHILLAMIPAVGLGLAF), 115–135 (LFNPQSVMYALVAGGLLLLAA), 152–171 (TYRQAFAIGCFQCLALWPGF), 189–209 (YAASEFSFILAVPMMLGASGL), 221–241 (GDLPMFAVGFITAFVVALIAI), and 251–271 (ISFVPFAIYRFIVAAAVYWVF).

Belongs to the UppP family.

The protein resides in the cell inner membrane. The enzyme catalyses di-trans,octa-cis-undecaprenyl diphosphate + H2O = di-trans,octa-cis-undecaprenyl phosphate + phosphate + H(+). In terms of biological role, catalyzes the dephosphorylation of undecaprenyl diphosphate (UPP). Confers resistance to bacitracin. The chain is Undecaprenyl-diphosphatase from Yersinia enterocolitica serotype O:8 / biotype 1B (strain NCTC 13174 / 8081).